The sequence spans 443 residues: Sulfoquinovose isomerase (443 aa).

It belongs to the SqvD family.

It carries out the reaction 6-sulfo-beta-D-quinovose = 6-deoxy-6-sulfo-D-fructose. Its function is as follows. Part of the sulfo-EMP2 pathway, a D-sulfoquinovose degradation pathway that produces sulfolactate (SL). Catalyzes the isomerization of sulfoquinovose (SQ) to 6-deoxy-6-sulfo-D-fructose (SF). This is Sulfoquinovose isomerase from Alkalicoccus urumqiensis (Bacillus urumqiensis).